The chain runs to 927 residues: DNA mismatch repair protein MutS (927 aa).

A disordered region spans residues Asp-44–Asp-80. Over residues Glu-67–Asn-79 the composition is skewed to acidic residues. ATP is bound at residue Gly-725 to Ser-732.

The protein belongs to the DNA mismatch repair MutS family.

In terms of biological role, this protein is involved in the repair of mismatches in DNA. It is possible that it carries out the mismatch recognition step. This protein has a weak ATPase activity. The polypeptide is DNA mismatch repair protein MutS (Prochlorococcus marinus (strain MIT 9303)).